Consider the following 317-residue polypeptide: Nicotianamine synthase (317 aa).

Belongs to the nicotianamine synthase (NAS)-like family. Homomultimer. As to expression, leaves and roots.

It carries out the reaction 3 S-adenosyl-L-methionine = nicotianamine + 3 S-methyl-5'-thioadenosine + 3 H(+). Functionally, synthesizes nicotianamine, a polyamine that serves as a sensor for the physiological iron status within the plant, and/or might be involved in the transport of iron. This Solanum lycopersicum (Tomato) protein is Nicotianamine synthase (CHLN).